A 332-amino-acid chain; its full sequence is Fructose-1,6-bisphosphatase class 1 (332 aa).

Residues Glu-89, Asp-110, Leu-112, and Asp-113 each coordinate Mg(2+). Residues 113-116 (DGSS), Asn-206, Tyr-239, 257-259 (YLY), and Lys-269 contribute to the substrate site. Glu-275 provides a ligand contact to Mg(2+).

This sequence belongs to the FBPase class 1 family. Homotetramer. Requires Mg(2+) as cofactor.

Its subcellular location is the cytoplasm. The catalysed reaction is beta-D-fructose 1,6-bisphosphate + H2O = beta-D-fructose 6-phosphate + phosphate. It participates in carbohydrate biosynthesis; gluconeogenesis. The sequence is that of Fructose-1,6-bisphosphatase class 1 from Escherichia coli O157:H7.